Consider the following 280-residue polypeptide: Energy-coupling factor transporter ATP-binding protein EcfA2 (280 aa).

Positions 3 to 245 (ISLENVSYTY…VAFLKEKQLG (243 aa)) constitute an ABC transporter domain. ATP is bound at residue 40–47 (GHTGSGKS).

The protein belongs to the ABC transporter superfamily. Energy-coupling factor EcfA family. Forms a stable energy-coupling factor (ECF) transporter complex composed of 2 membrane-embedded substrate-binding proteins (S component), 2 ATP-binding proteins (A component) and 2 transmembrane proteins (T component).

It localises to the cell membrane. Functionally, ATP-binding (A) component of a common energy-coupling factor (ECF) ABC-transporter complex. Unlike classic ABC transporters this ECF transporter provides the energy necessary to transport a number of different substrates. This Streptococcus thermophilus (strain CNRZ 1066) protein is Energy-coupling factor transporter ATP-binding protein EcfA2.